A 266-amino-acid polypeptide reads, in one-letter code: Glucosamine-6-phosphate deaminase (266 aa).

D67 functions as the Proton acceptor; for enolization step in the catalytic mechanism. N139 (for ring-opening step) is an active-site residue. H141 serves as the catalytic Proton acceptor; for ring-opening step. The For ring-opening step role is filled by E146.

Belongs to the glucosamine/galactosamine-6-phosphate isomerase family. NagB subfamily. As to quaternary structure, homohexamer.

The enzyme catalyses alpha-D-glucosamine 6-phosphate + H2O = beta-D-fructose 6-phosphate + NH4(+). It participates in amino-sugar metabolism; N-acetylneuraminate degradation; D-fructose 6-phosphate from N-acetylneuraminate: step 5/5. In terms of biological role, catalyzes the reversible isomerization-deamination of glucosamine 6-phosphate (GlcN6P) to form fructose 6-phosphate (Fru6P) and ammonium ion. The polypeptide is Glucosamine-6-phosphate deaminase (Marinomonas sp. (strain MWYL1)).